The primary structure comprises 1180 residues: Pyruvate carboxylase 2 (1180 aa).

Position 2 is an N-acetylserine (S2). The Biotin carboxylation domain maps to 19–471 (EKNKILVANR…WTTFIDDTPQ (453 aa)). Residues K137, E221, and H256 each coordinate ATP. The ATP-grasp domain maps to 141-338 (RHLAARANVP…IVSAQIQIAA (198 aa)). R313 is a catalytic residue. Residues 558–825 (TLLMDTTWRD…DTGINVEHVR (268 aa)) form the Pyruvate carboxyltransferase domain. Substrate contacts are provided by residues 566–570 (RDAHQ) and R639. A divalent metal cation is bound at residue D567. A divalent metal cation-binding residues include K735, H765, and H767. K735 bears the N6-carboxylysine mark. T899 is a binding site for substrate. Residues 1095-1170 (KADVHDTHQI…DASDLLVVLE (76 aa)) form the Biotinyl-binding domain. Residue K1136 is modified to N6-biotinyllysine.

In terms of assembly, homotetramer. It depends on biotin as a cofactor. Zn(2+) serves as cofactor.

The protein resides in the cytoplasm. The catalysed reaction is hydrogencarbonate + pyruvate + ATP = oxaloacetate + ADP + phosphate + H(+). It functions in the pathway carbohydrate biosynthesis; gluconeogenesis. In terms of biological role, pyruvate carboxylase catalyzes a 2-step reaction, involving the ATP-dependent carboxylation of the covalently attached biotin in the first step and the transfer of the carboxyl group to pyruvate in the second. In Saccharomyces cerevisiae (strain ATCC 204508 / S288c) (Baker's yeast), this protein is Pyruvate carboxylase 2 (PYC2).